The following is a 79-amino-acid chain: Large ribosomal subunit protein uL24 (79 aa).

This sequence belongs to the universal ribosomal protein uL24 family. As to quaternary structure, part of the 50S ribosomal subunit.

Its function is as follows. One of two assembly initiator proteins, it binds directly to the 5'-end of the 23S rRNA, where it nucleates assembly of the 50S subunit. One of the proteins that surrounds the polypeptide exit tunnel on the outside of the subunit. The protein is Large ribosomal subunit protein uL24 of Aliarcobacter butzleri (strain RM4018) (Arcobacter butzleri).